Consider the following 190-residue polypeptide: MEKLQNRILQEGHALSETVLKVDSFLNHQVDPDLMYEIGTYFKNYFKEHKITKVFTIESSGIAPAVMTAMQMNLPMVILKKQASKILNGDVYQTTVHSFTKGLDYELTLSKKYIAKEDNILIIDDFLANGEAALGAARLVKEAGAKVAGMGIVIEKSFQPGRKMLEDKGYDVYSLARIAKLQKGLIEFVK.

Positions 20 and 27 each coordinate xanthine. Residue 128-132 coordinates 5-phospho-alpha-D-ribose 1-diphosphate; sequence ANGEA. A xanthine-binding site is contributed by lysine 156.

This sequence belongs to the purine/pyrimidine phosphoribosyltransferase family. Xpt subfamily. As to quaternary structure, homodimer.

It localises to the cytoplasm. It carries out the reaction XMP + diphosphate = xanthine + 5-phospho-alpha-D-ribose 1-diphosphate. Its pathway is purine metabolism; XMP biosynthesis via salvage pathway; XMP from xanthine: step 1/1. Functionally, converts the preformed base xanthine, a product of nucleic acid breakdown, to xanthosine 5'-monophosphate (XMP), so it can be reused for RNA or DNA synthesis. In Clostridium botulinum (strain ATCC 19397 / Type A), this protein is Xanthine phosphoribosyltransferase 1.